The chain runs to 479 residues: Chromosomal replication initiator protein DnaA (479 aa).

The segment at 1-94 (MKGGTMVENA…QTLWRTERED (94 aa)) is domain I, interacts with DnaA modulators. Residues 94 to 142 (DIKGVELQVKRGLPEVSMGDAEDGEDGSGEGHELATQAAAPESRSDLAV) are domain II. Residues 106 to 137 (LPEVSMGDAEDGEDGSGEGHELATQAAAPESR) form a disordered region. Residues 143–359 (PLDPRFTFDT…GALNRLIAHA (217 aa)) form a domain III, AAA+ region region. ATP is bound by residues Gly-188, Gly-190, Lys-191, and Thr-192. Positions 360–479 (DLVGRPVTLD…VELLRRMLEG (120 aa)) are domain IV, binds dsDNA.

This sequence belongs to the DnaA family. Oligomerizes as a right-handed, spiral filament on DNA at oriC.

Its subcellular location is the cytoplasm. Plays an essential role in the initiation and regulation of chromosomal replication. ATP-DnaA binds to the origin of replication (oriC) to initiate formation of the DNA replication initiation complex once per cell cycle. Binds the DnaA box (a 9 base pair repeat at the origin) and separates the double-stranded (ds)DNA. Forms a right-handed helical filament on oriC DNA; dsDNA binds to the exterior of the filament while single-stranded (ss)DNA is stabiized in the filament's interior. The ATP-DnaA-oriC complex binds and stabilizes one strand of the AT-rich DNA unwinding element (DUE), permitting loading of DNA polymerase. After initiation quickly degrades to an ADP-DnaA complex that is not apt for DNA replication. Binds acidic phospholipids. The sequence is that of Chromosomal replication initiator protein DnaA from Gluconobacter oxydans (strain 621H) (Gluconobacter suboxydans).